A 104-amino-acid polypeptide reads, in one-letter code: L-rhamnose mutarotase (104 aa).

Y18 provides a ligand contact to substrate. H22 acts as the Proton donor in catalysis. Substrate-binding positions include Y41 and 76–77 (WW).

It belongs to the rhamnose mutarotase family. In terms of assembly, homodimer.

Its subcellular location is the cytoplasm. The enzyme catalyses alpha-L-rhamnose = beta-L-rhamnose. The protein operates within carbohydrate metabolism; L-rhamnose metabolism. Functionally, involved in the anomeric conversion of L-rhamnose. The sequence is that of L-rhamnose mutarotase from Shigella dysenteriae serotype 1 (strain Sd197).